A 197-amino-acid polypeptide reads, in one-letter code: UDP-N-acetylglucosamine transferase subunit alg13 (197 aa).

The interval 174–197 is disordered; that stretch reads VRGPDQKNQPTLEQVMSDEMGFVD.

The protein belongs to the glycosyltransferase 28 family. As to quaternary structure, heterodimer with alg14 to form a functional enzyme.

It is found in the endoplasmic reticulum. The enzyme catalyses an N-acetyl-alpha-D-glucosaminyl-diphospho-di-trans,poly-cis-dolichol + UDP-N-acetyl-alpha-D-glucosamine = an N,N'-diacetylchitobiosyl-diphospho-di-trans,poly-cis-dolichol + UDP + H(+). Involved in protein N-glycosylation. Essential for the second step of the dolichol-linked oligosaccharide pathway. The polypeptide is UDP-N-acetylglucosamine transferase subunit alg13 (alg13) (Aspergillus fumigatus (strain ATCC MYA-4609 / CBS 101355 / FGSC A1100 / Af293) (Neosartorya fumigata)).